We begin with the raw amino-acid sequence, 314 residues long: DNA-directed RNA polymerase subunit alpha (314 aa).

An alpha N-terminal domain (alpha-NTD) region spans residues methionine 1–threonine 228. The tract at residues lysine 245–aspartate 314 is alpha C-terminal domain (alpha-CTD).

Belongs to the RNA polymerase alpha chain family. In terms of assembly, homodimer. The RNAP catalytic core consists of 2 alpha, 1 beta, 1 beta' and 1 omega subunit. When a sigma factor is associated with the core the holoenzyme is formed, which can initiate transcription.

The catalysed reaction is RNA(n) + a ribonucleoside 5'-triphosphate = RNA(n+1) + diphosphate. Its function is as follows. DNA-dependent RNA polymerase catalyzes the transcription of DNA into RNA using the four ribonucleoside triphosphates as substrates. This Staphylococcus haemolyticus (strain JCSC1435) protein is DNA-directed RNA polymerase subunit alpha.